We begin with the raw amino-acid sequence, 779 residues long: Mesenchyme-specific cell surface glycoprotein (779 aa).

Residues 1 to 15 (MQFGVPLLVLCLALG) form the signal peptide. Residues asparagine 203 and asparagine 234 are each glycosylated (N-linked (GlcNAc...) asparagine). The segment at 249–363 (AGFPRGTTWS…QYPMIPTTPL (115 aa)) is disordered. The segment covering 262–351 (GAGGQGGQGQ…GGQGGQGGGN (90 aa)) has biased composition (gly residues). Asparagine 369, asparagine 451, and asparagine 609 each carry an N-linked (GlcNAc...) asparagine glycan.

Restricted to the primary mesenchyme cell lineage.

The protein localises to the cell membrane. In terms of biological role, not known. Could be involved in mesenchyme cell migration, adhesion, fusion, or spicule formation. The sequence is that of Mesenchyme-specific cell surface glycoprotein from Strongylocentrotus purpuratus (Purple sea urchin).